The following is a 351-amino-acid chain: Peroxidase C1B (351 aa).

Residues 1–28 (MHSPSSTSFTWILITLGCLAFYASLSDA) form the signal peptide. Cystine bridges form between C39–C119, C72–C77, C125–C329, and C205–C237. N-linked (GlcNAc...) asparagine glycosylation is present at N41. The active-site Proton acceptor is H70. Ca(2+)-binding residues include D71, V74, G76, D78, and S80. N-linked (GlcNAc...) asparagine glycosylation occurs at N85. A substrate-binding site is contributed by P167. H198 is a binding site for heme b. Position 199 (T199) interacts with Ca(2+). N-linked (GlcNAc...) asparagine glycans are attached at residues N214, N226, and N242. Residues D250, T253, and D258 each contribute to the Ca(2+) site. A glycan (N-linked (GlcNAc...) asparagine) is linked at N283.

Belongs to the peroxidase family. Classical plant (class III) peroxidase subfamily. The cofactor is Ca(2+). Heme b is required as a cofactor.

The protein resides in the secreted. Its subcellular location is the vacuole. The enzyme catalyses 2 a phenolic donor + H2O2 = 2 a phenolic radical donor + 2 H2O. Functionally, removal of H(2)O(2), oxidation of toxic reductants, biosynthesis and degradation of lignin, suberization, auxin catabolism, response to environmental stresses such as wounding, pathogen attack and oxidative stress. These functions might be dependent on each isozyme/isoform in each plant tissue. The chain is Peroxidase C1B (PRXC1B) from Armoracia rusticana (Horseradish).